We begin with the raw amino-acid sequence, 407 residues long: Tryptophan synthase beta chain (407 aa).

K86 carries the post-translational modification N6-(pyridoxal phosphate)lysine.

It belongs to the TrpB family. Tetramer of two alpha and two beta chains. Pyridoxal 5'-phosphate serves as cofactor.

It catalyses the reaction (1S,2R)-1-C-(indol-3-yl)glycerol 3-phosphate + L-serine = D-glyceraldehyde 3-phosphate + L-tryptophan + H2O. It functions in the pathway amino-acid biosynthesis; L-tryptophan biosynthesis; L-tryptophan from chorismate: step 5/5. The beta subunit is responsible for the synthesis of L-tryptophan from indole and L-serine. The protein is Tryptophan synthase beta chain of Shewanella woodyi (strain ATCC 51908 / MS32).